The sequence spans 901 residues: Protein translocase subunit SecA (901 aa).

ATP-binding positions include Q87, 105 to 109, and D512; that span reads GEGKT. The disordered stretch occupies residues 859 to 901; that stretch reads HQDDDSAAAAALAAQTGERKVGRNDPCPCGSGKKYKQCHGRLQ. Residues C885, C887, C896, and H897 each contribute to the Zn(2+) site. Residues 891 to 901 show a composition bias toward basic residues; that stretch reads KKYKQCHGRLQ.

It belongs to the SecA family. As to quaternary structure, monomer and homodimer. Part of the essential Sec protein translocation apparatus which comprises SecA, SecYEG and auxiliary proteins SecDF-YajC and YidC. Zn(2+) is required as a cofactor.

It is found in the cell inner membrane. The protein localises to the cytoplasm. The catalysed reaction is ATP + H2O + cellular proteinSide 1 = ADP + phosphate + cellular proteinSide 2.. Functionally, part of the Sec protein translocase complex. Interacts with the SecYEG preprotein conducting channel. Has a central role in coupling the hydrolysis of ATP to the transfer of proteins into and across the cell membrane, serving both as a receptor for the preprotein-SecB complex and as an ATP-driven molecular motor driving the stepwise translocation of polypeptide chains across the membrane. This is Protein translocase subunit SecA from Escherichia coli (strain 55989 / EAEC).